The following is an 861-amino-acid chain: APC membrane recruitment protein 3 (861 aa).

Disordered regions lie at residues 1 to 77, 179 to 206, 261 to 289, 351 to 415, 514 to 558, 576 to 644, 716 to 742, and 786 to 822; these read MELK…PKGG, AEGKSLPSPGDPSDPGGRRSKAFLPPGE, PSLELNEGPESPTQAAQGLESKVPRGPLQ, PLCP…FPRD, RGPT…GGAT, GLLA…SQKE, MLEQKQSSSSPSMTTIHGLPYSASTQD, and AHGSQLDSEPRSAPAARWSSQGHHPESLGLTLNSQQE. Residues 362 to 384 are compositionally biased toward polar residues; it reads SKASSIDTGTPKSEQPESVSTSD. A compositionally biased stretch (pro residues) spans 518-530; that stretch reads PRAPPTPGQPAAP. Positions 584 to 595 are enriched in low complexity; the sequence is ALGGATQGTGTL. The span at 598–609 shows a compositional bias: basic and acidic residues; sequence DASREEETRGHS. Composition is skewed to polar residues over residues 615 to 629 and 719 to 730; these read SMESAATSTTDTSGK and QKQSSSSPSMTT.

This sequence belongs to the Amer family.

The protein localises to the cell membrane. Regulator of the canonical Wnt signaling pathway. Acts by specifically binding phosphatidylinositol 4,5-bisphosphate (PtdIns(4,5)P2), translocating to the cell membrane. In Homo sapiens (Human), this protein is APC membrane recruitment protein 3 (AMER3).